Consider the following 531-residue polypeptide: MAALGCARLRWALRGAGRGLCPHGARAKAAIPAALPSDKATGAPGAGPGVRRRQRSLEEIPRLGQLRFFFQLFVQGYALQLHQLQVLYKAKYGPMWMSYLGPQMHVNLASAPLLEQVMRQEGKYPVRNDMELWKEHRDQHDLTYGPFTTEGHHWYQLRQALNQRLLKPAEAALYTDAFNEVIDDFMTRLDQLRAESASGNQVSDMAQLFYYFALEAICYILFEKRIGCLQRSIPEDTVTFVRSIGLMFQNSLYATFLPKWTRPVLPFWKRYLDGWNAIFSFGKKLIDEKLEDMEAQLQAAGPDGIQVSGYLHFLLASGQLSPREAMGSLPELLMAGVDTTSNTLTWALYHLSKDPEIQEALHEEVVGVVPAGQVPQHKDFAHMPLLKAVLKETLRLYPVVPTNSRIIEKEIEVDGFLFPKNTQFVFCHYVVSRDPTAFSEPESFQPHRWLRNSQPATPRIQHPFGSVPFGYGVRACLGRRIAELEMQLLLARLIQKYKVVLAPETGELKSVARIVLVPNKKVGLQFLQRQC.

The transit peptide at 1-33 (MAALGCARLRWALRGAGRGLCPHGARAKAAIPA) directs the protein to the mitochondrion. N6-acetyllysine is present on Lys283. The interval 384 to 398 (PLLKAVLKETLRLYP) is sterol-binding. Heme is bound at residue Cys476. An N6-acetyllysine mark is found at Lys509 and Lys520.

This sequence belongs to the cytochrome P450 family. As to quaternary structure, interacts with HSP70; this interaction is required for initial targeting to mitochondria. The cofactor is heme. In terms of tissue distribution, expressed in the neural retina and underlying retinal pigment epithelium (at protein level). Expressed in the gray and white matter of cerebellum (at protein level).

The protein resides in the mitochondrion inner membrane. It carries out the reaction 5beta-cholestane-3alpha,7alpha,12alpha-triol + 6 reduced [adrenodoxin] + 3 O2 + 5 H(+) = (25R)-3alpha,7alpha,12alpha-trihydroxy-5beta-cholestan-26-oate + 6 oxidized [adrenodoxin] + 4 H2O. The catalysed reaction is cholestanol + 2 reduced [adrenodoxin] + O2 + 2 H(+) = (25R)-26-hydroxycholestanol + 2 oxidized [adrenodoxin] + H2O. The enzyme catalyses (25R)-3beta-hydroxycholest-5-en-7-one-26-al + 2 reduced [adrenodoxin] + O2 + H(+) = (25R)-3beta-hydroxycholest-5-en-7-one-26-oate + 2 oxidized [adrenodoxin] + H2O. It catalyses the reaction (25R)-3beta,26-dihydroxycholest-5-en-7-one + 2 reduced [adrenodoxin] + O2 + 2 H(+) = (25R)-3beta-hydroxycholest-5-en-7-one-26-al + 2 oxidized [adrenodoxin] + 2 H2O. It carries out the reaction 7-oxocholesterol + 2 reduced [adrenodoxin] + O2 + 2 H(+) = (25R)-3beta,26-dihydroxycholest-5-en-7-one + 2 oxidized [adrenodoxin] + H2O. The catalysed reaction is calciol + 2 reduced [adrenodoxin] + O2 + 2 H(+) = calcidiol + 2 oxidized [adrenodoxin] + H2O. The enzyme catalyses (25R)-5beta-cholestane-3alpha,7alpha,12alpha,26-tetrol + 2 reduced [adrenodoxin] + O2 + 2 H(+) = (25R)-3alpha,7alpha,12alpha-trihydroxy-5beta-cholestan-26-al + 2 oxidized [adrenodoxin] + 2 H2O. It catalyses the reaction 2 reduced [adrenodoxin] + cholesterol + O2 + 2 H(+) = (25R)-cholest-5-ene-3beta,26-diol + 2 oxidized [adrenodoxin] + H2O. It carries out the reaction (25R)-3beta,4beta-dihydroxycholest-5-en-26-al + 2 reduced [adrenodoxin] + O2 + H(+) = (25R)-3beta,4beta-dihydroxycholest-5-en-26-oate + 2 oxidized [adrenodoxin] + H2O. The catalysed reaction is (25R)-4beta,26-dihydroxycholesterol + 2 reduced [adrenodoxin] + O2 + 2 H(+) = (25R)-3beta,4beta-dihydroxycholest-5-en-26-al + 2 oxidized [adrenodoxin] + 2 H2O. The enzyme catalyses 4beta-hydroxycholesterol + 2 reduced [adrenodoxin] + O2 + 2 H(+) = (25R)-4beta,26-dihydroxycholesterol + 2 oxidized [adrenodoxin] + H2O. It catalyses the reaction (25R)-3beta-hydroxy-5-cholesten-26-al + 2 reduced [adrenodoxin] + O2 + H(+) = (25R)-3beta-hydroxy-5-cholestenoate + 2 oxidized [adrenodoxin] + H2O. It carries out the reaction (25R)-cholest-5-ene-3beta,26-diol + 2 reduced [adrenodoxin] + O2 + 2 H(+) = (25R)-3beta-hydroxy-5-cholesten-26-al + 2 oxidized [adrenodoxin] + 2 H2O. The catalysed reaction is (25R)-3alpha,7alpha,12alpha-trihydroxy-5beta-cholestan-26-al + 2 reduced [adrenodoxin] + O2 + H(+) = (25R)-3alpha,7alpha,12alpha-trihydroxy-5beta-cholestan-26-oate + 2 oxidized [adrenodoxin] + H2O. The enzyme catalyses 5beta-cholestane-3alpha,7alpha,12alpha-triol + 2 reduced [adrenodoxin] + O2 + 2 H(+) = (25R)-5beta-cholestane-3alpha,7alpha,12alpha,26-tetrol + 2 oxidized [adrenodoxin] + H2O. It participates in hormone biosynthesis; cholecalciferol biosynthesis. Its pathway is steroid metabolism; cholesterol degradation. The protein operates within lipid metabolism; bile acid biosynthesis. Functionally, cytochrome P450 monooxygenase that catalyzes regio- and stereospecific hydroxylation of cholesterol and its derivatives. Hydroxylates (with R stereochemistry) the terminal methyl group of cholesterol side-chain in a three step reaction to yield at first a C26 alcohol, then a C26 aldehyde and finally a C26 acid. Regulates cholesterol homeostasis by catalyzing the conversion of excess cholesterol to bile acids via both the 'neutral' (classic) and the 'acid' (alternative) pathways. May also regulate cholesterol homeostasis via generation of active oxysterols, which act as ligands for NR1H2 and NR1H3 nuclear receptors, modulating the transcription of genes involved in lipid metabolism. Plays a role in cholestanol metabolism in the cerebellum. Similarly to cholesterol, hydroxylates cholestanol and may facilitate sterol diffusion through the blood-brain barrier to the systemic circulation for further degradation. Also hydroxylates retinal 7-ketocholesterol, a noxious oxysterol with pro-inflammatory and pro-apoptotic effects, and may play a role in its elimination from the retinal pigment epithelium. May play a redundant role in vitamin D biosynthesis. Catalyzes 25-hydroxylation of vitamin D3 that is required for its conversion to a functionally active form. This chain is Sterol 26-hydroxylase, mitochondrial, found in Homo sapiens (Human).